A 388-amino-acid polypeptide reads, in one-letter code: Na(+)/H(+) antiporter NhaA (388 aa).

Transmembrane regions (helical) follow at residues 13-33 (AAGGIILIVAAIIALIMANTP), 36-56 (GIYHAFLNLPVMVKVSSLEIA), 59-79 (LLLWINDGLMAIFFLVVGLEV), 95-115 (VFPAIAALGGMLAPALIYLMF), 125-145 (GWAIPAATDIAFALGVMALLG), 154-174 (VFLLALAIIDDLGVIVIIALF), 179-199 (VSMAALGVAAASIAVLAFMNW), 213-233 (LVLWVAILKSGVHATLAGVII), 259-279 (VAFLILPLFAFANAGVSLQGV), 287-307 (LLPVGIAAGLFIGKPLGIFTF), 328-348 (VFAVSVLCGIGFTMSIFIASL), and 363-383 (LGILIGSTTAAVVGYGLLRMS).

It belongs to the NhaA Na(+)/H(+) (TC 2.A.33) antiporter family.

The protein resides in the cell inner membrane. The enzyme catalyses Na(+)(in) + 2 H(+)(out) = Na(+)(out) + 2 H(+)(in). Functionally, na(+)/H(+) antiporter that extrudes sodium in exchange for external protons. The sequence is that of Na(+)/H(+) antiporter NhaA from Serratia proteamaculans (strain 568).